The chain runs to 368 residues: Flagellar P-ring protein (368 aa).

An N-terminal signal peptide occupies residues 1–24; the sequence is MTLTRPLALISALAALILALPADA.

The protein belongs to the FlgI family. In terms of assembly, the basal body constitutes a major portion of the flagellar organelle and consists of four rings (L,P,S, and M) mounted on a central rod.

It is found in the periplasm. It localises to the bacterial flagellum basal body. Assembles around the rod to form the L-ring and probably protects the motor/basal body from shearing forces during rotation. The sequence is that of Flagellar P-ring protein from Methylobacillus flagellatus (strain ATCC 51484 / DSM 6875 / VKM B-1610 / KT).